The sequence spans 661 residues: Bifunctional xylanase/xylan deacetylase (661 aa).

A signal peptide spans 1–27; it reads MKLPTLGKCVVRTLMGAVALGAISVNA. In terms of domain architecture, GH11 spans 29–226; the sequence is TLSSNSTGTN…SRGSSDITVS (198 aa). The active-site Nucleophile; for endoxylanase activity is glutamate 116. Glutamate 213 (proton donor; for endoxylanase activity) is an active-site residue. The tract at residues 220–259 is disordered; that stretch reads SSDITVSEGTSGGGTSSVGGASSSVNSSTGGGSSGGITVR. Residues 237–247 are compositionally biased toward low complexity; it reads VGGASSSVNSS. Residues 394-577 form a polysaccharide deacetylase region; the sequence is SNCSGYVGIT…AKGLCPGRID (184 aa). Residues 398–574 form the NodB homology domain; the sequence is GYVGITFDDG…NLRAKGLCPG (177 aa). Positions 578–610 are disordered; sequence PNTGRAVAPSSSGGSSSVALSSSSRSSSSAGGN. Residues 581–608 are compositionally biased toward low complexity; sequence GRAVAPSSSGGSSSVALSSSSRSSSSAG. One can recognise a CBM10 domain in the interval 616–645; it reads QCNWWGTFYPLCQTQTSGWGWENSRSCIST.

In the N-terminal section; belongs to the glycosyl hydrolase 11 (cellulase G) family.

The protein localises to the secreted. The catalysed reaction is Endohydrolysis of (1-&gt;4)-beta-D-xylosidic linkages in xylans.. It catalyses the reaction Deacetylation of xylans and xylo-oligosaccharides.. It participates in glycan degradation; xylan degradation. Its function is as follows. Endo-acting xylanase which specifically cleaves internal linkages on the xylan backbone, releasing xylooligosaccharides. Is able to hydrolyze oat spelt xylan and the arabinoxylans from wheat and rye, releasing xylobiose as the major product. Also likely catalyzes, via its C-terminal domain, the removal of acetyl groups from acetylated xylan. Thus, has the capability of hydrolyzing acetylated xylan. Does not attack mannan, galactan, arabinan or any cellulosic substrates. The protein is Bifunctional xylanase/xylan deacetylase (xyn11A) of Cellvibrio japonicus (Pseudomonas fluorescens subsp. cellulosa).